A 741-amino-acid chain; its full sequence is NAD(P)H-quinone oxidoreductase subunit 5, chloroplastic (741 aa).

16 helical membrane-spanning segments follow: residues 9–29 (WIIPFLPLPVPMLIGLGLLLF), 40–60 (WAFQSVFLLSIVMILSMNLSI), 89–109 (IDPLTSIMSILITTVGIMVLI), 125–145 (FAYMSFFSTSMLGLVTSSNLI), 147–167 (IYIFWELVGVCSYLLIGFWFT), 185–205 (GDFGLLLGILGFYWITGSFEF), 219–239 (NEVNFLFVTLCAILLFAGAIA), 258–278 (TPISALIHAATMVAAGIFLVA), 283–303 (LFIVIPHIMNFISLIGIITVF), 327–347 (LGYMMLALGMGSYRSALFHLI), 354–374 (ALLFLGSGSVIHSMETLVGYC), 396–416 (NSFLLGTLSLCGIPPLACFWS), 425–445 (WLYSPIFGIIAWSTAGLTAFY), 549–569 (LFPILVLILFTLFVGFLGIPF), 605–625 (FFSVSIASFGIFIAFFLYKPV), and 721–741 (YLFFYFSYVAIFLLIYYFFNL).

Belongs to the complex I subunit 5 family. In terms of assembly, NDH is composed of at least 16 different subunits, 5 of which are encoded in the nucleus.

The protein resides in the plastid. Its subcellular location is the chloroplast thylakoid membrane. It carries out the reaction a plastoquinone + NADH + (n+1) H(+)(in) = a plastoquinol + NAD(+) + n H(+)(out). It catalyses the reaction a plastoquinone + NADPH + (n+1) H(+)(in) = a plastoquinol + NADP(+) + n H(+)(out). In terms of biological role, NDH shuttles electrons from NAD(P)H:plastoquinone, via FMN and iron-sulfur (Fe-S) centers, to quinones in the photosynthetic chain and possibly in a chloroplast respiratory chain. The immediate electron acceptor for the enzyme in this species is believed to be plastoquinone. Couples the redox reaction to proton translocation, and thus conserves the redox energy in a proton gradient. This chain is NAD(P)H-quinone oxidoreductase subunit 5, chloroplastic (ndhF), found in Cichorium intybus (Chicory).